The chain runs to 331 residues: Ketol-acid reductoisomerase (NADP(+)) (331 aa).

Positions 2 to 182 constitute a KARI N-terminal Rossmann domain; sequence AKMYYDKDAD…GGTRAGVIET (181 aa). Residues 25-28, serine 51, serine 53, and 83-86 contribute to the NADP(+) site; these read FGSQ and DEKQ. The active site involves histidine 108. Position 134 (glycine 134) interacts with NADP(+). The region spanning 183–328 is the KARI C-terminal knotted domain; the sequence is TFKEETETDL…KGLREMMAWI (146 aa). 4 residues coordinate Mg(2+): aspartate 191, glutamate 195, glutamate 227, and glutamate 231. A substrate-binding site is contributed by serine 252.

Belongs to the ketol-acid reductoisomerase family. Requires Mg(2+) as cofactor.

It carries out the reaction (2R)-2,3-dihydroxy-3-methylbutanoate + NADP(+) = (2S)-2-acetolactate + NADPH + H(+). It catalyses the reaction (2R,3R)-2,3-dihydroxy-3-methylpentanoate + NADP(+) = (S)-2-ethyl-2-hydroxy-3-oxobutanoate + NADPH + H(+). It participates in amino-acid biosynthesis; L-isoleucine biosynthesis; L-isoleucine from 2-oxobutanoate: step 2/4. The protein operates within amino-acid biosynthesis; L-valine biosynthesis; L-valine from pyruvate: step 2/4. Involved in the biosynthesis of branched-chain amino acids (BCAA). Catalyzes an alkyl-migration followed by a ketol-acid reduction of (S)-2-acetolactate (S2AL) to yield (R)-2,3-dihydroxy-isovalerate. In the isomerase reaction, S2AL is rearranged via a Mg-dependent methyl migration to produce 3-hydroxy-3-methyl-2-ketobutyrate (HMKB). In the reductase reaction, this 2-ketoacid undergoes a metal-dependent reduction by NADPH to yield (R)-2,3-dihydroxy-isovalerate. This Thermoanaerobacter sp. (strain X514) protein is Ketol-acid reductoisomerase (NADP(+)).